The chain runs to 287 residues: uncharacterized protein (287 aa).

The next 10 membrane-spanning stretches (helical) occupy residues 7–28 (LLLTVLAMLAFAGNSLLCRAAL), 32–54 (AIDAVSFTALRLFSGALMLAVLL), 67–86 (GWRGAAALFVYAAAFSYAYV), 91–113 (GTGALLLFGAVQVTLLLAGLLRG), 120–139 (ALLGFLLALGGLLFLLLPGA), 144–163 (LGGALLMLLSGLAWGLYTLL), 170–192 (PLAVSAGNFLRALAFAALLLLAF), 202–224 (GLAYALLSGALASGLGYAVWYSA), 231–253 (IQGASVQLSVPVLAALCGALLLG), and 263–280 (ATLAVLGGIALILAPRLG). 2 consecutive EamA domains span residues 15–136 (LAFA…FLLL) and 155–276 (LAWG…LILA).

The protein resides in the cell membrane. This is an uncharacterized protein from Pseudomonas aeruginosa (strain ATCC 15692 / DSM 22644 / CIP 104116 / JCM 14847 / LMG 12228 / 1C / PRS 101 / PAO1).